The sequence spans 475 residues: Ataxin-10 (475 aa).

Residue Arg-10 is modified to Omega-N-methylarginine. Residues Ser-12 and Ser-77 each carry the phosphoserine modification. Thr-82 is modified (phosphothreonine). A Phosphoserine modification is found at Ser-430.

It belongs to the ataxin-10 family. As to quaternary structure, homooligomer. Interacts with GNB2. Interacts with IQCB1. Interacts with OGT. Post-translationally, polyubiquitinated. In terms of processing, phosphorylation at Ser-12 by AURKB promotes the association of ATXN10 with PLK1. Phosphorylation at Ser-77 and Thr-82 by PLK1 may play a role in the regulation of cytokinesis and may stimulate the proteasome-mediated degradation of ATXN10. In terms of tissue distribution, ubiquitous distribution. Markedly increased expression in testis, adrenals, and brain.

It is found in the cytoplasm. The protein localises to the perinuclear region. Its subcellular location is the midbody. It localises to the cytoskeleton. The protein resides in the cilium basal body. It is found in the microtubule organizing center. The protein localises to the centrosome. Its subcellular location is the centriole. Its function is as follows. May play a role in the regulation of cytokinesis. May play a role in signaling by stimulating protein glycosylation. Induces neuritogenesis by activating the Ras-MAP kinase pathway and is necessary for the survival of cerebellar neurons. Does not appear to play a major role in ciliogenesis. This chain is Ataxin-10 (Atxn10), found in Rattus norvegicus (Rat).